The chain runs to 164 residues: Protein SprT (164 aa).

One can recognise a SprT-like domain in the interval 14–156; that stretch reads QQAETFFKRT…LCRRCREPLV (143 aa). Zn(2+) is bound at residue H69. E70 is a catalytic residue. H73 contributes to the Zn(2+) binding site.

This sequence belongs to the SprT family. Requires Zn(2+) as cofactor.

The protein resides in the cytoplasm. This chain is Protein SprT, found in Pseudomonas savastanoi pv. phaseolicola (strain 1448A / Race 6) (Pseudomonas syringae pv. phaseolicola (strain 1448A / Race 6)).